The primary structure comprises 125 residues: 14 kDa phosphohistidine phosphatase (125 aa).

A2 is modified (N-acetylalanine). Position 21 (K21) interacts with substrate. H53 acts as the Proton acceptor in catalysis. 94-96 (SMG) provides a ligand contact to substrate.

As to quaternary structure, monomer.

Its subcellular location is the cytoplasm. The enzyme catalyses N(pros)-phospho-L-histidyl-[protein] + H2O = L-histidyl-[protein] + phosphate. The catalysed reaction is N(tele)-phospho-L-histidyl-[protein] + H2O = L-histidyl-[protein] + phosphate. Exhibits phosphohistidine phosphatase activity. Functionally, may have a significant involvement in neuronal signaling. In Oryctolagus cuniculus (Rabbit), this protein is 14 kDa phosphohistidine phosphatase (PHPT1).